A 407-amino-acid chain; its full sequence is DAZ-associated protein 1 (407 aa).

Met-1 carries the post-translational modification N-acetylmethionine. RRM domains lie at 10–97 and 113–190; these read GKLF…RTRP and NKIF…RAEP. Residues 74–117 are disordered; the sequence is TLDGRNIDPKPCTPRGMQPERTRPKEGWQKGPRSDNSKSNKIFV. The span at 91–111 shows a compositional bias: basic and acidic residues; the sequence is QPERTRPKEGWQKGPRSDNSK. Position 150 is an N6-acetyllysine (Lys-150). Residues 185-194 are compositionally biased toward basic and acidic residues; that stretch reads VKRAEPRDSK. Positions 185–407 are disordered; it reads VKRAEPRDSK…NVQGFHPYRR (223 aa). The span at 195-207 shows a compositional bias: polar residues; it reads SQAPGQPGASQWG. The segment covering 247–262 has biased composition (pro residues); it reads GPPPAGRGAPPPPPPF. Omega-N-methylarginine is present on Arg-253. Positions 280–294 are enriched in low complexity; it reads FPQGYGAPPQFSFGY. Pro residues predominate over residues 295-315; the sequence is GPPPPPPDQFAPPGVPPPPAT. Positions 364–379 are enriched in low complexity; the sequence is SDPSQQPPSYGGPSVP. Residues 380–393 are compositionally biased toward gly residues; the sequence is GSGGPPAGGSGFGR.

Interacts with DAZ and DAZL. Acetylation at Lys-150 is predominantly observed in the nuclear fraction, and may regulate nucleocytoplasmic transport. Mainly expressed in testis. Expressed to a lower level in thymus. Weakly or not expressed in heart, liver, brain, placenta, lung, skeletal muscle, kidney and pancreas.

It localises to the cytoplasm. The protein resides in the nucleus. RNA-binding protein, which may be required during spermatogenesis. The protein is DAZ-associated protein 1 (DAZAP1) of Homo sapiens (Human).